A 219-amino-acid chain; its full sequence is UPF0173 metal-dependent hydrolase Mhun_1705 (219 aa).

This sequence belongs to the UPF0173 family.

This is UPF0173 metal-dependent hydrolase Mhun_1705 from Methanospirillum hungatei JF-1 (strain ATCC 27890 / DSM 864 / NBRC 100397 / JF-1).